Here is an 81-residue protein sequence, read N- to C-terminus: Small ribosomal subunit protein bS16 (81 aa).

The protein belongs to the bacterial ribosomal protein bS16 family.

The sequence is that of Small ribosomal subunit protein bS16 from Acetivibrio thermocellus (strain ATCC 27405 / DSM 1237 / JCM 9322 / NBRC 103400 / NCIMB 10682 / NRRL B-4536 / VPI 7372) (Clostridium thermocellum).